Consider the following 635-residue polypeptide: ATP-binding protein Uup (635 aa).

ABC transporter domains follow at residues 1–253 and 320–546; these read MSLI…RVEE and FEME…KTEE. ATP-binding positions include 36 to 43 and 352 to 359; these read GRNGAGKS and GPNGCGKT. A C-terminal domain (CTD), binds DNA, required to complement a deletion mutant region spans residues 551–635; sequence KAETVKRSSS…EYLEALKNGG (85 aa). A coiled-coil region spans residues 563–631; it reads SYKLQRELEQ…FERWEYLEAL (69 aa).

Belongs to the ABC transporter superfamily. ABCF family. Uup subfamily.

The protein resides in the cytoplasm. It carries out the reaction ATP + H2O = ADP + phosphate + H(+). With respect to regulation, ATPase activity inhibited by N-ethylmaleimide but not by vanadate. Its function is as follows. Probably plays a role in ribosome assembly or function; overexpression suppresses cold-sensitive growth of a bipA deletion. May be involved in resolution of branched DNA intermediates that result from template switching in postreplication gaps. Binds DNA at Holliday junctions. May be involved in the correct segregation of nucleoids. Has ATPase activity, binds DNA non-sequence specifically; the presence of DNA does not change the ATPase activity. Mutations in this gene cause an increase in RecA-independent precise excision of transposons and insertion elements, and also reduce bacteriophage Mu growth. Genetic interactions among priB, dam, lexA, nagC, polA, rdgB, rdgB, rep and uup link the PriA-PriB replication restart pathway to DNA double-strand break repair. The polypeptide is ATP-binding protein Uup (Escherichia coli (strain K12)).